Consider the following 365-residue polypeptide: P43 5S RNA-binding protein (365 aa).

9 consecutive C2H2-type zinc fingers follow at residues 15–39 (FRCP…MAGH), 45–69 (WKCG…MKRH), 75–100 (HSCP…LYKH), 106–130 (LKCS…VSEH), 136–160 (SVCD…HRRH), 163–187 (YRCS…LKKH), 191–213 (LQCA…KATH), 220–245 (LPCP…RKVH), and 251–275 (HRCP…LVVH).

As to quaternary structure, the 42S RNP particle comprises four subunits each of which contains one molecule of 5S RNA, three molecules of tRNA, two molecules of p50 (EF1-alpha) and one molecule of the 5S RNA binding protein 43.

In terms of biological role, p43 is a 5S RNA binding protein which is a major constituent of oocytes and comprises part of a 42S ribonucleoprotein storage particle. This is P43 5S RNA-binding protein from Xenopus borealis (Kenyan clawed frog).